The following is a 357-amino-acid chain: Protein RecA (357 aa).

73–80 contributes to the ATP binding site; the sequence is GPESSGKT.

It belongs to the RecA family.

The protein localises to the cytoplasm. Its function is as follows. Can catalyze the hydrolysis of ATP in the presence of single-stranded DNA, the ATP-dependent uptake of single-stranded DNA by duplex DNA, and the ATP-dependent hybridization of homologous single-stranded DNAs. It interacts with LexA causing its activation and leading to its autocatalytic cleavage. The chain is Protein RecA from Nitratidesulfovibrio vulgaris (strain ATCC 29579 / DSM 644 / CCUG 34227 / NCIMB 8303 / VKM B-1760 / Hildenborough) (Desulfovibrio vulgaris).